The primary structure comprises 39 residues: Gas vesicle protein C (39 aa).

This sequence belongs to the gas vesicle GvpC family.

The protein localises to the gas vesicle. Functionally, confers stability, involved in shaping gas vesicles, hollow, gas filled proteinaceous nanostructures. During planktonic growth they allow positioning of the organism at a favorable depth for light or nutrient acquisition. The polypeptide is Gas vesicle protein C (Spirulina sp. (strain CCAP 1475/10)).